A 438-amino-acid chain; its full sequence is Tol-Pal system protein TolB (438 aa).

A signal peptide spans 1–35; it reads MITMKNILKLRATGLLLLLLLMISVLGNGIGQAMA.

Belongs to the TolB family. As to quaternary structure, the Tol-Pal system is composed of five core proteins: the inner membrane proteins TolA, TolQ and TolR, the periplasmic protein TolB and the outer membrane protein Pal. They form a network linking the inner and outer membranes and the peptidoglycan layer.

The protein resides in the periplasm. Functionally, part of the Tol-Pal system, which plays a role in outer membrane invagination during cell division and is important for maintaining outer membrane integrity. The polypeptide is Tol-Pal system protein TolB (Desulfotalea psychrophila (strain LSv54 / DSM 12343)).